Reading from the N-terminus, the 279-residue chain is Phosphate import ATP-binding protein PstB (279 aa).

The ABC transporter domain occupies 33–274; that stretch reads LDINKLNLFY…PLKKKTEDYI (242 aa). 65 to 72 is a binding site for ATP; it reads GPSGCGKS.

The protein belongs to the ABC transporter superfamily. Phosphate importer (TC 3.A.1.7) family. The complex is composed of two ATP-binding proteins (PstB), two transmembrane proteins (PstC and PstA) and a solute-binding protein (PstS).

It localises to the cell inner membrane. It catalyses the reaction phosphate(out) + ATP + H2O = ADP + 2 phosphate(in) + H(+). In terms of biological role, part of the ABC transporter complex PstSACB involved in phosphate import. Responsible for energy coupling to the transport system. This is Phosphate import ATP-binding protein PstB from Colwellia psychrerythraea (strain 34H / ATCC BAA-681) (Vibrio psychroerythus).